Here is a 671-residue protein sequence, read N- to C-terminus: Chitin biosynthesis protein CHS5 (671 aa).

The region spanning 78 to 168 (KPESPVLKIV…EKVILRTHKM (91 aa)) is the Fibronectin type-III domain. The BRCT domain maps to 166-262 (HKMTDMSGIT…RIVGVRGFYL (97 aa)). The disordered stretch occupies residues 280–671 (EELSYSKENE…KKNKKKGKKK (392 aa)). T305 carries the phosphothreonine modification. Residues 311–321 (ASPNDNESNPS) show a composition bias toward polar residues. Residues 322–332 (EAKEQGEKSGH) show a composition bias toward basic and acidic residues. A phosphoserine mark is found at S338, S362, S365, S383, and S384. The span at 349–365 (ALENETTIETVNPSVRS) shows a compositional bias: polar residues. Residues 409–419 (KSEDTDTHSNE) are compositionally biased toward basic and acidic residues. Positions 434 to 443 (NNITTESAGE) are enriched in polar residues. The segment covering 461 to 486 (EIETPEVNESIEDANEPAEDSNEPVE) has biased composition (acidic residues). Over residues 487–521 (DSNKPVKDSNKPVEDSNKPVEDSNKPVEDSNKPVE) the composition is skewed to basic and acidic residues. Positions 522-538 (DANEPVEDTSEPVEDAG) are enriched in acidic residues. The segment covering 542-551 (QETNEFTTDI) has biased composition (polar residues). 2 positions are modified to phosphoserine: S573 and S579. Over residues 581-591 (EDVKPEEKGSE) the composition is skewed to basic and acidic residues. K584 participates in a covalent cross-link: Glycyl lysine isopeptide (Lys-Gly) (interchain with G-Cter in ubiquitin). S590 carries the post-translational modification Phosphoserine. A compositionally biased stretch (polar residues) spans 606–620 (GESTTHQKTEASASL). Positions 627–638 (EEQETTEAEVNT) are enriched in acidic residues. Residues 657-671 (NKKKNKKNKKKGKKK) are compositionally biased toward basic residues.

This sequence belongs to the CHS5 family. Component of the CHS5/6 complex composed of the 4 CHAPS proteins BCH1, BCH2, BUD7, and CHS6 as well as at least CHS5 and GTP-bound ARF1. The complex interacts with the cargo protein CHS3.

The protein localises to the golgi apparatus. It localises to the trans-Golgi network membrane. In terms of biological role, component of the CHS5/6 complex which mediates export of specific cargo proteins, including chitin synthase CHS3. Also involved in targeting FUS1 to sites of polarized growth. This is Chitin biosynthesis protein CHS5 (CHS5) from Saccharomyces cerevisiae (strain ATCC 204508 / S288c) (Baker's yeast).